Reading from the N-terminus, the 497-residue chain is Uridine 5'-monophosphate synthase (497 aa).

Positions 8 to 226 are OPRTase; sequence TRNGALKRNL…KLEINSELEN (219 aa). Positions 227-232 are domain linker; it reads LSSLPY. Residues 233 to 496 form an OMPdecase region; it reads VENVRTPLAE…WDALTRSDDS (264 aa). UMP is bound by residues aspartate 271 and 293 to 295; that span reads KLH. Lysine 293 serves as a coordination point for orotidine 5'-phosphate. Active-site for OMPdecase activity residues include aspartate 324, lysine 326, and aspartate 329. Residues lysine 326, aspartate 329, threonine 333, serine 387, 446–448, and 466–467 contribute to the orotidine 5'-phosphate site; these read QQW and GR. UMP contacts are provided by residues aspartate 329, threonine 333, serine 387, 446 to 448, and 466 to 467; these read QQW and GR.

In the N-terminal section; belongs to the purine/pyrimidine phosphoribosyltransferase family. It in the C-terminal section; belongs to the OMP decarboxylase family. As to expression, expressed in intestine and in neurons near the nerve ring and rectum.

The protein localises to the cytoplasm. It carries out the reaction orotidine 5'-phosphate + diphosphate = orotate + 5-phospho-alpha-D-ribose 1-diphosphate. The catalysed reaction is orotidine 5'-phosphate + H(+) = UMP + CO2. The protein operates within pyrimidine metabolism; UMP biosynthesis via de novo pathway; UMP from orotate: step 1/2. It functions in the pathway pyrimidine metabolism; UMP biosynthesis via de novo pathway; UMP from orotate: step 2/2. Functionally, bifunctional enzyme which catalyzes the formation of UMP from orotate in the de novo pathway of pyrimidine biosynthesis. May also form UMP from uracil. Regulates the size of gut granules during embryonic development. Involved in resistance to DNA damaging agents including UV-C and X-ray radiation. This Caenorhabditis elegans protein is Uridine 5'-monophosphate synthase.